Reading from the N-terminus, the 520-residue chain is Cell adhesion molecule CEACAM2 (520 aa).

Residues 1-34 (MELASAHLHKGQVPWFGLLLTASLLASWSPPTTA) form the signal peptide. In terms of domain architecture, Ig-like V-type spans 35 to 141 (QVTVMAFPLH…RVLTGQFHVH (107 aa)). Residues 35-422 (QVTVMAFPLH…IFDSTYDISD (388 aa)) lie on the Extracellular side of the membrane. N-linked (GlcNAc...) asparagine glycans are attached at residues N87, N104, N148, N152, N175, N199, N206, N210, N226, N258, N290, N294, N304, N317, N333, and N361. Ig-like C2-type domains follow at residues 145-234 (LKSN…FSLN), 239-319 (PDTP…KNIT), and 327-411 (PSLQ…IKLE). An intrachain disulfide couples C167 to C217. A disulfide bridge links C261 with C301. The cysteines at positions 346 and 394 are disulfide-linked. Residues 423-443 (VPIAVIITGAVAGVILIAGLA) form a helical membrane-spanning segment. Residues 444-520 (YRLCSRKSRW…ETVYSEVKKK (77 aa)) are Cytoplasmic-facing. The interval 457 to 520 (QRDLTEHKPS…ETVYSEVKKK (64 aa)) is disordered. Positions 466–480 (SASNHNLAPSDNSPN) are enriched in polar residues. Y487 carries the phosphotyrosine modification. Residues 490–513 (LNFNSQQPNRPTSAPSSPRATETV) are compositionally biased toward polar residues. S502 carries the post-translational modification Phosphoserine. The residue at position 514 (Y514) is a Phosphotyrosine.

Belongs to the immunoglobulin superfamily. CEA family. As to quaternary structure, interacts weakly with MHV spike protein in tissue culture. As to expression, isoform 2 is detected in elongating spermatids within the seminiferous epithelium (at protein level). Expressed in kidney, colon, uterus, gut mononuclear cells, crypt epithelia of intestinal tissues, and to a lesser extent, in spleen. Expressed in brain including VMH, globus pallidus, ventral pallidum, striatum, olfactory bulb and hippocampus. Also detected in rectal carcinoma cell line CMT93. Isoform 2 and isoform 3 are expressed in testis. Isoform 2 is detected in seminiferous tubule, not detected in epididymal spermatozoa. Also not observed on spermatogonia, spermatocytes, round spermatids or somatic Sertoli cells. During stages I-VII of spermatogenesis, detected on the elongating spermatids. At spermiation (stage VIII) and subsequent stages IX-XII, levels are drastically reduced or absent in the seminiferous tubules. Sometimes weakly detected in the apical region of stage-VIII seminiferous epithelium. Isoform 2 level is very low in stomach, kidney, intestine, liver and spleen.

Its subcellular location is the cell membrane. In terms of biological role, controls energy balance and peripheral insulin action. Involved in the regulation of feeding behavior particularly in the ventromedial nucleus of hypothalamus (VMH) regulation of food intake. Has a role in the regulation of metabolic rate and insulin sensitivity or resistance via effects on brown adipogenesis, sympathetic nervous outflow to brown adipose tissue, spontaneous activity and energy expenditure in skeletal muscle. In case of murine coronavirus (MHV) infection, does probably not serve as functional receptor for the virus. Its function is as follows. Isoform 2 may be an adhesion molecule contributing to cell to cell adhesion between elongating spermatids and Sertoli cells within the seminiferous epithelium. This Mus musculus (Mouse) protein is Cell adhesion molecule CEACAM2.